Here is a 151-residue protein sequence, read N- to C-terminus: uncharacterized protein (151 aa).

This is an uncharacterized protein from Gallid herpesvirus 2 (strain GA) (GaHV-2).